The following is a 225-amino-acid chain: Biosynthetic peptidoglycan transglycosylase (225 aa).

Residues 7–27 (SFLFKMVLILLIAPIVLVGVV) traverse the membrane as a helical segment.

Belongs to the glycosyltransferase 51 family.

It localises to the cell inner membrane. It carries out the reaction [GlcNAc-(1-&gt;4)-Mur2Ac(oyl-L-Ala-gamma-D-Glu-L-Lys-D-Ala-D-Ala)](n)-di-trans,octa-cis-undecaprenyl diphosphate + beta-D-GlcNAc-(1-&gt;4)-Mur2Ac(oyl-L-Ala-gamma-D-Glu-L-Lys-D-Ala-D-Ala)-di-trans,octa-cis-undecaprenyl diphosphate = [GlcNAc-(1-&gt;4)-Mur2Ac(oyl-L-Ala-gamma-D-Glu-L-Lys-D-Ala-D-Ala)](n+1)-di-trans,octa-cis-undecaprenyl diphosphate + di-trans,octa-cis-undecaprenyl diphosphate + H(+). The protein operates within cell wall biogenesis; peptidoglycan biosynthesis. Functionally, peptidoglycan polymerase that catalyzes glycan chain elongation from lipid-linked precursors. The polypeptide is Biosynthetic peptidoglycan transglycosylase (Vibrio parahaemolyticus serotype O3:K6 (strain RIMD 2210633)).